We begin with the raw amino-acid sequence, 161 residues long: Ribonuclease H (161 aa).

Positions 2–141 (TNNEIIAATD…ADSLARQAAN (140 aa)) constitute an RNase H type-1 domain. Positions 11, 46, 69, and 133 each coordinate Mg(2+).

The protein belongs to the RNase H family. As to quaternary structure, monomer. Mg(2+) is required as a cofactor.

It is found in the cytoplasm. It catalyses the reaction Endonucleolytic cleavage to 5'-phosphomonoester.. In terms of biological role, endonuclease that specifically degrades the RNA of RNA-DNA hybrids. This is Ribonuclease H from Tropheryma whipplei (strain TW08/27) (Whipple's bacillus).